The following is a 1464-amino-acid chain: Secretory phospholipase A2 receptor (1464 aa).

The first 22 residues, methionine 1–alanine 22, serve as a signal peptide directing secretion. At glutamate 23–serine 1398 the chain is on the extracellular side. A Ricin B-type lectin domain is found at lysine 40–tyrosine 163. 17 cysteine pairs are disulfide-bonded: cysteine 53–cysteine 66, cysteine 91–cysteine 108, cysteine 180–cysteine 206, cysteine 194–cysteine 221, cysteine 262–cysteine 356, cysteine 332–cysteine 348, cysteine 408–cysteine 503, cysteine 480–cysteine 495, cysteine 619–cysteine 636, cysteine 701–cysteine 798, cysteine 776–cysteine 790, cysteine 842–cysteine 939, cysteine 916–cysteine 931, cysteine 1069–cysteine 1089, cysteine 1211–cysteine 1225, cysteine 1282–cysteine 1378, and cysteine 1356–cysteine 1370. Residue asparagine 95 is glycosylated (N-linked (GlcNAc...) asparagine). The Fibronectin type-II domain occupies alanine 175 to aspartate 223. 8 C-type lectin domains span residues asparagine 240–lysine 357, tyrosine 387–lysine 504, histidine 524–cysteine 645, glycine 675–lysine 799, tyrosine 821–lysine 940, phenylalanine 967–cysteine 1098, tyrosine 1123–cysteine 1234, and phenylalanine 1259–lysine 1379. Asparagine 456 is a glycosylation site (N-linked (GlcNAc...) asparagine). Residues isoleucine 1399–phenylalanine 1419 traverse the membrane as a helical segment. The Cytoplasmic segment spans residues cysteine 1420–glutamine 1464. The Endocytosis signal motif lies at asparagine 1437 to threonine 1443.

Interacts with sPLA2-IB/PLA2G1B; this interaction mediates intracellular signaling as well as clearance of extracellular sPLA2-IB/PLA2G1B via endocytotic pathway. Interacts with sPLA2-X/PLA2G10; this interaction mediates sPLA2-X/PLA2G10 clearance and inactivation. The secretory phospholipase A2 receptor form may be produced by the action of metalloproteinases. It contains all extracellular domains and only lacks transmembrane and cytosolic regions. It is however unclear whether this form is produced by proteolytic cleavage as suggested by some experiments, or by alternative splicing.

The protein resides in the cell membrane. Its subcellular location is the secreted. Receptor for secretory phospholipase A2 (sPLA2). Also able to bind to snake PA2-like toxins. Although its precise function remains unclear, binding of sPLA2 to its receptor participates in both positive and negative regulation of sPLA2 functions as well as clearance of sPLA2. Binding of sPLA2-IB/PLA2G1B induces various effects depending on the cell type, such as activation of the mitogen-activated protein kinase (MAPK) cascade to induce cell proliferation, the production of lipid mediators, selective release of arachidonic acid in bone marrow-derived mast cells. In neutrophils, binding of sPLA2-IB/PLA2G1B can activate p38 MAPK to stimulate elastase release and cell adhesion. May be involved in responses in pro-inflammatory cytokine productions during endotoxic shock. Also has endocytic properties and rapidly internalizes sPLA2 ligands, which is particularly important for the clearance of extracellular sPLA2s to protect their potent enzymatic activities. The soluble secretory phospholipase A2 receptor form is circulating and acts as a negative regulator of sPLA2 functions by blocking the biological functions of sPLA2-IB/PLA2G1B and sPLA2-X/PLA2G10. The sequence is that of Secretory phospholipase A2 receptor (PLA2R1) from Pongo abelii (Sumatran orangutan).